The following is a 118-amino-acid chain: Ribonuclease P protein component (118 aa).

The protein belongs to the RnpA family. In terms of assembly, consists of a catalytic RNA component (M1 or rnpB) and a protein subunit.

The catalysed reaction is Endonucleolytic cleavage of RNA, removing 5'-extranucleotides from tRNA precursor.. Functionally, RNaseP catalyzes the removal of the 5'-leader sequence from pre-tRNA to produce the mature 5'-terminus. It can also cleave other RNA substrates such as 4.5S RNA. The protein component plays an auxiliary but essential role in vivo by binding to the 5'-leader sequence and broadening the substrate specificity of the ribozyme. This chain is Ribonuclease P protein component, found in Rickettsia felis (strain ATCC VR-1525 / URRWXCal2) (Rickettsia azadi).